We begin with the raw amino-acid sequence, 296 residues long: Cytidine deaminase (296 aa).

2 consecutive CMP/dCMP-type deaminase domains span residues 47–167 (EESE…FGPS) and 186–296 (DSSD…IDPA). 88–90 (NLE) contacts substrate. Position 101 (H101) interacts with Zn(2+). E103 acts as the Proton donor in catalysis. 2 residues coordinate Zn(2+): C128 and C131.

It belongs to the cytidine and deoxycytidylate deaminase family. In terms of assembly, homodimer. Requires Zn(2+) as cofactor.

It carries out the reaction cytidine + H2O + H(+) = uridine + NH4(+). The enzyme catalyses 2'-deoxycytidine + H2O + H(+) = 2'-deoxyuridine + NH4(+). Its function is as follows. This enzyme scavenges exogenous and endogenous cytidine and 2'-deoxycytidine for UMP synthesis. The protein is Cytidine deaminase of Shewanella woodyi (strain ATCC 51908 / MS32).